Here is a 368-residue protein sequence, read N- to C-terminus: C6 finger domain transcription factor tcpZ (368 aa).

Positions 30 to 56 (CDACHASKVRCSGEPICARCQRDNVAC) form a DNA-binding region, zn(2)-C6 fungal-type. The disordered stretch occupies residues 84–109 (FIEQRQRPAASQPPGHGTSRDSSVCA).

It localises to the nucleus. Transcription factor that specifically regulates the thioclapurine biosynthesis gene cluster. The chain is C6 finger domain transcription factor tcpZ from Claviceps purpurea (strain 20.1) (Ergot fungus).